A 547-amino-acid polypeptide reads, in one-letter code: Chaperonin GroEL (547 aa).

Residues 30 to 33, lysine 51, 87 to 91, glycine 415, 479 to 481, and aspartate 495 each bind ATP; these read TLGP, DGTTT, and NAA. Residues 526-547 form a disordered region; that stretch reads KKDEPTPPAAGGGMGGMGGMDF. Residues 535-547 are compositionally biased toward gly residues; that stretch reads AGGGMGGMGGMDF.

This sequence belongs to the chaperonin (HSP60) family. As to quaternary structure, forms a cylinder of 14 subunits composed of two heptameric rings stacked back-to-back. Interacts with the co-chaperonin GroES.

It is found in the cytoplasm. The enzyme catalyses ATP + H2O + a folded polypeptide = ADP + phosphate + an unfolded polypeptide.. Functionally, together with its co-chaperonin GroES, plays an essential role in assisting protein folding. The GroEL-GroES system forms a nano-cage that allows encapsulation of the non-native substrate proteins and provides a physical environment optimized to promote and accelerate protein folding. The protein is Chaperonin GroEL of Xylella fastidiosa (strain M12).